The sequence spans 67 residues: UPF0434 protein RALTA_A0561 (67 aa).

This sequence belongs to the UPF0434 family.

This chain is UPF0434 protein RALTA_A0561, found in Cupriavidus taiwanensis (strain DSM 17343 / BCRC 17206 / CCUG 44338 / CIP 107171 / LMG 19424 / R1) (Ralstonia taiwanensis (strain LMG 19424)).